Here is a 173-residue protein sequence, read N- to C-terminus: Co-chaperone protein HscB homolog (173 aa).

One can recognise a J domain in the interval Asn3–Leu75.

Belongs to the HscB family. In terms of assembly, interacts with HscA and stimulates its ATPase activity.

In terms of biological role, co-chaperone involved in the maturation of iron-sulfur cluster-containing proteins. Seems to help targeting proteins to be folded toward HscA. The chain is Co-chaperone protein HscB homolog from Mannheimia succiniciproducens (strain KCTC 0769BP / MBEL55E).